The primary structure comprises 388 residues: Cdc42 effector protein 1 (388 aa).

The disordered stretch occupies residues 1–28 (MPGPQGGTGAPSMSLGKLSPVGWVPSSH). A phosphoserine mark is found at Ser-19 and Ser-27. Position 34 is a phosphothreonine (Thr-34). Residues 38-52 (ISPPLGDFRHTMHVG) enclose the CRIB domain. Residue Ser-39 is modified to Phosphoserine. Arg-53 carries the post-translational modification Omega-N-methylarginine. Residues Ser-65, Ser-77, Ser-101, Ser-113, Ser-121, and Ser-139 each carry the phosphoserine modification. The segment at 165 to 206 (RLPRVEKHSSRDRDHDRDPDHSQDREQSSSPSEPNPNPELRR) is disordered. Positions 167 to 191 (PRVEKHSSRDRDHDRDPDHSQDREQ) are enriched in basic and acidic residues. 4 positions are modified to phosphoserine: Ser-193, Ser-207, Ser-209, and Ser-212. A run of 2 repeats spans residues 237-243 (PAANPPA) and 250-256 (PTAKPPA). The tract at residues 237 to 257 (PAANPPAPAANPAPTAKPPAD) is disordered. The 2 X 7 AA tandem repeats of [PT]-[AT]-A-[ENT]-[PT]-[PTS]-[AG] stretch occupies residues 237–270 (PAANPPAPAANPAPTAKPPADAVTTLDTVTSLPA). The span at 239-253 (ANPPAPAANPAPTAK) shows a compositional bias: pro residues. Ser-298, Ser-318, Ser-347, and Ser-350 each carry phosphoserine.

The protein belongs to the BORG/CEP family. In terms of assembly, interacts with RHOQ and CDC42, in a GTP-dependent manner.

It is found in the endomembrane system. The protein localises to the cytoplasm. It localises to the cytoskeleton. Functionally, probably involved in the organization of the actin cytoskeleton. Induced membrane extensions in fibroblasts. This chain is Cdc42 effector protein 1, found in Rattus norvegicus (Rat).